A 231-amino-acid chain; its full sequence is Ion-translocating oxidoreductase complex subunit E (231 aa).

The next 6 membrane-spanning stretches (helical) occupy residues 18–38 (ALVQLLGLCPLLAVTSTATNA), 39–59 (LGLGLATTLVLTLTNLTISTL), 63–83 (TPAEIRIPIYVMIIASVVSAV), 86–106 (LINAYAFGLYQSLGIFIPLIV), 125–145 (ALSALDGFSIGMGATCAMFVL), and 182–202 (PFLLAMLPPSAFIGLGLMLAG).

It belongs to the NqrDE/RnfAE family. As to quaternary structure, the complex is composed of six subunits: RsxA, RsxB, RsxC, RsxD, RsxE and RsxG.

Its subcellular location is the cell inner membrane. In terms of biological role, part of a membrane-bound complex that couples electron transfer with translocation of ions across the membrane. Required to maintain the reduced state of SoxR. In Escherichia coli O7:K1 (strain IAI39 / ExPEC), this protein is Ion-translocating oxidoreductase complex subunit E.